We begin with the raw amino-acid sequence, 320 residues long: Aspartate carbamoyltransferase catalytic subunit (320 aa).

Residues arginine 70 and threonine 71 each coordinate carbamoyl phosphate. Lysine 98 is an L-aspartate binding site. Carbamoyl phosphate-binding residues include arginine 120, histidine 150, and glutamine 153. Residues arginine 184 and arginine 239 each coordinate L-aspartate. Residues glycine 280 and proline 281 each coordinate carbamoyl phosphate.

Belongs to the aspartate/ornithine carbamoyltransferase superfamily. ATCase family. Heterododecamer (2C3:3R2) of six catalytic PyrB chains organized as two trimers (C3), and six regulatory PyrI chains organized as three dimers (R2).

It catalyses the reaction carbamoyl phosphate + L-aspartate = N-carbamoyl-L-aspartate + phosphate + H(+). Its pathway is pyrimidine metabolism; UMP biosynthesis via de novo pathway; (S)-dihydroorotate from bicarbonate: step 2/3. Catalyzes the condensation of carbamoyl phosphate and aspartate to form carbamoyl aspartate and inorganic phosphate, the committed step in the de novo pyrimidine nucleotide biosynthesis pathway. The chain is Aspartate carbamoyltransferase catalytic subunit from Xylella fastidiosa (strain Temecula1 / ATCC 700964).